The sequence spans 254 residues: Demethylmenaquinone methyltransferase (254 aa).

Residues Thr-62, Asp-80, 122–123, and Ser-139 each bind S-adenosyl-L-methionine; that span reads DG.

The protein belongs to the class I-like SAM-binding methyltransferase superfamily. MenG/UbiE family.

It carries out the reaction a 2-demethylmenaquinol + S-adenosyl-L-methionine = a menaquinol + S-adenosyl-L-homocysteine + H(+). Its pathway is quinol/quinone metabolism; menaquinone biosynthesis; menaquinol from 1,4-dihydroxy-2-naphthoate: step 2/2. In terms of biological role, methyltransferase required for the conversion of demethylmenaquinol (DMKH2) to menaquinol (MKH2). This Parafrankia sp. (strain EAN1pec) protein is Demethylmenaquinone methyltransferase.